A 186-amino-acid chain; its full sequence is Negative modulator of initiation of replication (186 aa).

This sequence belongs to the SeqA family. Homodimer. Polymerizes to form helical filaments.

The protein localises to the cytoplasm. In terms of biological role, negative regulator of replication initiation, which contributes to regulation of DNA replication and ensures that replication initiation occurs exactly once per chromosome per cell cycle. Binds to pairs of hemimethylated GATC sequences in the oriC region, thus preventing assembly of replication proteins and re-initiation at newly replicated origins. Repression is relieved when the region becomes fully methylated. In Haemophilus ducreyi (strain 35000HP / ATCC 700724), this protein is Negative modulator of initiation of replication.